A 201-amino-acid chain; its full sequence is CASP-like protein 2B2 (201 aa).

Residues 1-28 are Cytoplasmic-facing; that stretch reads MSYLGVGVSPGNVTGSSTKMKLIDRKVR. The helical transmembrane segment at 29–49 threads the bilayer; sequence VTELILRSLVCAFALVAAILV. Over 50–71 the chain is Extracellular; sequence ATDVQVREIFTIQKKAKFTDMK. A helical transmembrane segment spans residues 72-92; the sequence is ALVFLVVINGIAAGYSLVQAV. Residues 93-108 lie on the Cytoplasmic side of the membrane; it reads CCLVGLMKGSVLLSEP. The helical transmembrane segment at 109 to 129 threads the bilayer; sequence LAWAIFFGDQAVAYLCVAGVA. Residues 130–166 are Extracellular-facing; sequence AAAQSAAFAKLGQPELQWMKICDMYGKFCNQVGEGIA. A helical membrane pass occupies residues 167–187; the sequence is SALFACIGMVLISCISAFGVF. The Cytoplasmic segment spans residues 188–201; sequence RLYGGSKPRQSSRW.

Belongs to the Casparian strip membrane proteins (CASP) family. As to quaternary structure, homodimer and heterodimers.

The protein localises to the cell membrane. The protein is CASP-like protein 2B2 of Arabidopsis lyrata subsp. lyrata (Lyre-leaved rock-cress).